Consider the following 374-residue polypeptide: UDP-N-acetylglucosamine--N-acetylmuramyl-(pentapeptide) pyrophosphoryl-undecaprenol N-acetylglucosamine transferase (374 aa).

UDP-N-acetyl-alpha-D-glucosamine-binding positions include 13–15, Asn-124, Arg-165, Ser-193, and Gln-294; that span reads TGG.

This sequence belongs to the glycosyltransferase 28 family. MurG subfamily.

The protein localises to the cell inner membrane. The enzyme catalyses di-trans,octa-cis-undecaprenyl diphospho-N-acetyl-alpha-D-muramoyl-L-alanyl-D-glutamyl-meso-2,6-diaminopimeloyl-D-alanyl-D-alanine + UDP-N-acetyl-alpha-D-glucosamine = di-trans,octa-cis-undecaprenyl diphospho-[N-acetyl-alpha-D-glucosaminyl-(1-&gt;4)]-N-acetyl-alpha-D-muramoyl-L-alanyl-D-glutamyl-meso-2,6-diaminopimeloyl-D-alanyl-D-alanine + UDP + H(+). It functions in the pathway cell wall biogenesis; peptidoglycan biosynthesis. Cell wall formation. Catalyzes the transfer of a GlcNAc subunit on undecaprenyl-pyrophosphoryl-MurNAc-pentapeptide (lipid intermediate I) to form undecaprenyl-pyrophosphoryl-MurNAc-(pentapeptide)GlcNAc (lipid intermediate II). This is UDP-N-acetylglucosamine--N-acetylmuramyl-(pentapeptide) pyrophosphoryl-undecaprenol N-acetylglucosamine transferase from Rhizobium etli (strain CIAT 652).